We begin with the raw amino-acid sequence, 278 residues long: Fasciclin-like arabinogalactan protein 5 (278 aa).

The N-terminal stretch at 1–24 is a signal peptide; it reads MGLKASLSLLSLTILLVFSKVVTA. Residues 25-169 enclose the FAS1 domain; it reads NNITLAFQKY…LSIIQITMPI (145 aa). 4 N-linked (GlcNAc...) asparagine glycosylation sites follow: Asn-26, Asn-74, Asn-126, and Asn-159. The tract at residues 199-257 is disordered; that stretch reads VVPAPGPAADDNSPDSAVPKTPPAPATDTPEADSPAPAPSADNEKIEAADKAKPSSSAS. Residues 224-239 are compositionally biased toward low complexity; the sequence is ATDTPEADSPAPAPSA. The segment covering 240 to 251 has biased composition (basic and acidic residues); sequence DNEKIEAADKAK. Residue Ser-255 is the site of GPI-anchor amidated serine attachment. The propeptide at 256–278 is removed in mature form; the sequence is ASKAGWSFDVILLLAFLASFAGF.

This sequence belongs to the fasciclin-like AGP family.

It is found in the cell membrane. Functionally, may be a cell surface adhesion protein. The chain is Fasciclin-like arabinogalactan protein 5 (FLA5) from Arabidopsis thaliana (Mouse-ear cress).